The chain runs to 953 residues: Zinc finger protein 507 (953 aa).

Residue Ser95 is modified to Phosphoserine. C2H2-type zinc fingers lie at residues 125 to 147 (YQCS…IKQH), 155 to 185 (LMCS…ANIH), and 248 to 270 (YRCL…AWKH). Phosphoserine is present on Ser427. Residues 470–489 (KGLATDENAPPGRRRTNSES) form a disordered region. 5 C2H2-type zinc fingers span residues 641 to 663 (YRCR…LRVH), 669 to 691 (YQCP…MIHH), 697 to 720 (YQCK…REQH), 758 to 780 (YRCD…RRIH), and 786 to 808 (YRCS…MWKH). The segment at 831–891 (GRVLGKTPGK…KLSPTSNTSY (61 aa)) is disordered. The span at 854–891 (TGSSENAVSSSELMSQTPSEVLGTNENEKLSPTSNTSY) shows a compositional bias: polar residues. A C2H2-type 9 zinc finger spans residues 911–933 (FCCCICGFESTSKENLLDHMKEH).

It belongs to the krueppel C2H2-type zinc-finger protein family.

It is found in the nucleus. Functionally, may be involved in transcriptional regulation. The polypeptide is Zinc finger protein 507 (ZNF507) (Pongo abelii (Sumatran orangutan)).